The primary structure comprises 936 residues: Aconitate hydratase A (936 aa).

Residues 401-449 form a disordered region; the sequence is VTPDFDAEGPATENTSAQTAGTPASAADAKGNIPSAAAGAEGRPSNPVT. A compositionally biased stretch (polar residues) spans 412-422; it reads TENTSAQTAGT. [4Fe-4S] cluster is bound by residues cysteine 472, cysteine 538, and cysteine 541.

This sequence belongs to the aconitase/IPM isomerase family. As to quaternary structure, monomer. The cofactor is [4Fe-4S] cluster.

It catalyses the reaction citrate = D-threo-isocitrate. The enzyme catalyses (2S,3R)-3-hydroxybutane-1,2,3-tricarboxylate = 2-methyl-cis-aconitate + H2O. Its pathway is carbohydrate metabolism; tricarboxylic acid cycle; isocitrate from oxaloacetate: step 2/2. The protein operates within organic acid metabolism; propanoate degradation. In terms of biological role, involved in the catabolism of short chain fatty acids (SCFA) via the tricarboxylic acid (TCA)(acetyl degradation route) and probably via the 2-methylcitrate cycle I (propionate degradation route). Catalyzes the reversible isomerization of citrate to isocitrate via cis-aconitate. Could catalyze the hydration of 2-methyl-cis-aconitate to yield (2R,3S)-2-methylisocitrate. The apo form of AcnA functions as a RNA-binding regulatory protein. The sequence is that of Aconitate hydratase A (acn) from Corynebacterium jeikeium (strain K411).